The following is a 147-amino-acid chain: Large ribosomal subunit protein uL13 (147 aa).

The protein belongs to the universal ribosomal protein uL13 family. In terms of assembly, part of the 50S ribosomal subunit.

Functionally, this protein is one of the early assembly proteins of the 50S ribosomal subunit, although it is not seen to bind rRNA by itself. It is important during the early stages of 50S assembly. The protein is Large ribosomal subunit protein uL13 of Pseudothermotoga lettingae (strain ATCC BAA-301 / DSM 14385 / NBRC 107922 / TMO) (Thermotoga lettingae).